The chain runs to 639 residues: UvrABC system protein C (639 aa).

The GIY-YIG domain occupies Glu-31–Ile-109. Residues Ser-218–Val-253 form the UVR domain.

Belongs to the UvrC family. Interacts with UvrB in an incision complex.

It is found in the cytoplasm. The UvrABC repair system catalyzes the recognition and processing of DNA lesions. UvrC both incises the 5' and 3' sides of the lesion. The N-terminal half is responsible for the 3' incision and the C-terminal half is responsible for the 5' incision. This is UvrABC system protein C from Colwellia psychrerythraea (strain 34H / ATCC BAA-681) (Vibrio psychroerythus).